A 569-amino-acid polypeptide reads, in one-letter code: DNA-binding protein eta2 (569 aa).

2 disordered regions span residues 1 to 26 (MMLAIDMTINENQGTRSNLESPTLSC) and 133 to 159 (KRKIARSSSDDSESKVESTNSFNAKKR). Residues 9–26 (INENQGTRSNLESPTLSC) are compositionally biased toward polar residues. Position 21 is a phosphoserine (Ser21). Myb-like domains are found at residues 322-371 (LDPK…RFVV) and 377-459 (ETID…EKTI). The disordered stretch occupies residues 459–487 (IASYSSNQRQEEDQGKKRKKRKKKKSKGK). The segment covering 474–487 (KKRKKRKKKKSKGK) has biased composition (basic residues).

It localises to the nucleus. In Schizosaccharomyces pombe (strain 972 / ATCC 24843) (Fission yeast), this protein is DNA-binding protein eta2 (eta2).